A 567-amino-acid chain; its full sequence is Urease subunit alpha (567 aa).

In terms of domain architecture, Urease spans 129 to 567; the sequence is GGIDTHIHWI…LPMAQRYFLF (439 aa). 3 residues coordinate Ni(2+): histidine 134, histidine 136, and lysine 217. Residue lysine 217 is modified to N6-carboxylysine. Histidine 219 is a binding site for substrate. Positions 246 and 272 each coordinate Ni(2+). Histidine 320 serves as the catalytic Proton donor. Residue aspartate 360 participates in Ni(2+) binding.

This sequence belongs to the metallo-dependent hydrolases superfamily. Urease alpha subunit family. As to quaternary structure, heterotrimer of UreA (gamma), UreB (beta) and UreC (alpha) subunits. Three heterotrimers associate to form the active enzyme. Requires Ni cation as cofactor. In terms of processing, carboxylation allows a single lysine to coordinate two nickel ions.

It localises to the cytoplasm. The enzyme catalyses urea + 2 H2O + H(+) = hydrogencarbonate + 2 NH4(+). It participates in nitrogen metabolism; urea degradation; CO(2) and NH(3) from urea (urease route): step 1/1. This Enterobacter sp. (strain 638) protein is Urease subunit alpha.